The sequence spans 474 residues: ATP synthase subunit beta (474 aa).

G153–T160 contacts ATP.

Belongs to the ATPase alpha/beta chains family. As to quaternary structure, F-type ATPases have 2 components, CF(1) - the catalytic core - and CF(0) - the membrane proton channel. CF(1) has five subunits: alpha(3), beta(3), gamma(1), delta(1), epsilon(1). CF(0) has three main subunits: a(1), b(2) and c(9-12). The alpha and beta chains form an alternating ring which encloses part of the gamma chain. CF(1) is attached to CF(0) by a central stalk formed by the gamma and epsilon chains, while a peripheral stalk is formed by the delta and b chains.

It localises to the cell inner membrane. It catalyses the reaction ATP + H2O + 4 H(+)(in) = ADP + phosphate + 5 H(+)(out). Functionally, produces ATP from ADP in the presence of a proton gradient across the membrane. The catalytic sites are hosted primarily by the beta subunits. The polypeptide is ATP synthase subunit beta (Rickettsia prowazekii (strain Madrid E)).